The primary structure comprises 268 residues: Adenosylcobinamide-GDP ribazoletransferase (268 aa).

A run of 6 helical transmembrane segments spans residues 54 to 74 (IAGL…GVLW), 80 to 100 (AVVL…DGLS), 124 to 144 (IGVM…AFLA), 150 to 170 (WLTA…YGIV), 202 to 222 (ALAL…VWMV), and 243 to 263 (GALC…SAPM).

It belongs to the CobS family. It depends on Mg(2+) as a cofactor.

The protein resides in the cell membrane. The enzyme catalyses alpha-ribazole + adenosylcob(III)inamide-GDP = adenosylcob(III)alamin + GMP + H(+). The catalysed reaction is alpha-ribazole 5'-phosphate + adenosylcob(III)inamide-GDP = adenosylcob(III)alamin 5'-phosphate + GMP + H(+). It participates in cofactor biosynthesis; adenosylcobalamin biosynthesis; adenosylcobalamin from cob(II)yrinate a,c-diamide: step 7/7. Joins adenosylcobinamide-GDP and alpha-ribazole to generate adenosylcobalamin (Ado-cobalamin). Also synthesizes adenosylcobalamin 5'-phosphate from adenosylcobinamide-GDP and alpha-ribazole 5'-phosphate. The sequence is that of Adenosylcobinamide-GDP ribazoletransferase from Roseiflexus sp. (strain RS-1).